We begin with the raw amino-acid sequence, 542 residues long: Chaperonin GroEL (542 aa).

Residues 29–32 (TLGP), 86–90 (DGTTT), Gly413, 476–478 (NAA), and Asp492 contribute to the ATP site.

This sequence belongs to the chaperonin (HSP60) family. In terms of assembly, forms a cylinder of 14 subunits composed of two heptameric rings stacked back-to-back. Interacts with the co-chaperonin GroES.

Its subcellular location is the cytoplasm. It carries out the reaction ATP + H2O + a folded polypeptide = ADP + phosphate + an unfolded polypeptide.. Functionally, together with its co-chaperonin GroES, plays an essential role in assisting protein folding. The GroEL-GroES system forms a nano-cage that allows encapsulation of the non-native substrate proteins and provides a physical environment optimized to promote and accelerate protein folding. The chain is Chaperonin GroEL from Lactococcus lactis subsp. cremoris (strain SK11).